The primary structure comprises 218 residues: UPF0502 protein Shewana3_1622 (218 aa).

Belongs to the UPF0502 family.

This is UPF0502 protein Shewana3_1622 from Shewanella sp. (strain ANA-3).